Here is a 400-residue protein sequence, read N- to C-terminus: MIPKQPKSNILIFLLENSDHLGLLKSLITFLPGRYGDSELFSEGLYSVANILQSYLDYRSSGILLSNNIDKISNGEKVPPPYYLTTLRWITTVQSLELFFEMLATKKGEQHDDSNSNNNNSNNNIKKMIIFIIELLKAILRLKLLIKTNGDMLVHHSFYVPSKDVKTILENNRNQQKQFQNKRPAVTMSINNNNNINNNDNNNINNNNNTNDDNFNNNNNNNNNRRTLSDQIFEQQRIVNQENNLLYQQQRELQQNESTLIKLLPPPPPKDYNTKTIGEILFIFRPVIYWVSYCIFGKKSWKPWFLSLVTELLSKSFSEYGNFKQKIRLTLLEAKELNRRKKLLFFYLIRSPFYEKFIGDGLLNKFLNFLKKIHIFKTLIDILINYLNVYRTRYFYTSAS.

The interval 176 to 226 (QKQFQNKRPAVTMSINNNNNINNNDNNNINNNNNTNDDNFNNNNNNNNNRR) is disordered. A compositionally biased stretch (low complexity) spans 190-224 (INNNNNINNNDNNNINNNNNTNDDNFNNNNNNNNN).

Belongs to the peroxin-16 family.

The protein localises to the cytoplasm. Functionally, required for peroxisome membrane biogenesis. The polypeptide is Peroxisome biogenesis factor 16 (pex16) (Dictyostelium discoideum (Social amoeba)).